The sequence spans 345 residues: Putative pyridoxal reductase (345 aa).

The active-site Proton donor is Tyr60.

Belongs to the aldo/keto reductase family.

Its subcellular location is the cytoplasm. It is found in the nucleus. It catalyses the reaction pyridoxine + NADP(+) = pyridoxal + NADPH + H(+). It functions in the pathway cofactor degradation; B6 vitamer degradation; pyridoxal from pyridoxine (dehydrogenase route): step 1/1. Its function is as follows. Catalyzes the reduction of pyridoxal (PL) with NADPH and oxidation of pyridoxine (PN) with NADP(+). The sequence is that of Putative pyridoxal reductase from Saccharomyces cerevisiae (strain ATCC 204508 / S288c) (Baker's yeast).